The following is a 594-amino-acid chain: UvrABC system protein C (594 aa).

In terms of domain architecture, GIY-YIG spans 13–99 (HSSGVYQYFD…IKQLKPKYNI (87 aa)). Residues 205-240 (DKLIKELELKMERLSNNLRFEEALIYRDRIAKIQKI) form the UVR domain.

Belongs to the UvrC family. As to quaternary structure, interacts with UvrB in an incision complex.

The protein localises to the cytoplasm. Functionally, the UvrABC repair system catalyzes the recognition and processing of DNA lesions. UvrC both incises the 5' and 3' sides of the lesion. The N-terminal half is responsible for the 3' incision and the C-terminal half is responsible for the 5' incision. The polypeptide is UvrABC system protein C (Helicobacter pylori (strain HPAG1)).